We begin with the raw amino-acid sequence, 172 residues long: Large ribosomal subunit protein uL10 (172 aa).

It belongs to the universal ribosomal protein uL10 family. Part of the ribosomal stalk of the 50S ribosomal subunit. The N-terminus interacts with L11 and the large rRNA to form the base of the stalk. The C-terminus forms an elongated spine to which L12 dimers bind in a sequential fashion forming a multimeric L10(L12)X complex.

Functionally, forms part of the ribosomal stalk, playing a central role in the interaction of the ribosome with GTP-bound translation factors. In Chlamydia trachomatis serovar A (strain ATCC VR-571B / DSM 19440 / HAR-13), this protein is Large ribosomal subunit protein uL10.